A 318-amino-acid chain; its full sequence is Transaldolase (318 aa).

Catalysis depends on K131, which acts as the Schiff-base intermediate with substrate.

This sequence belongs to the transaldolase family. Type 1 subfamily. As to quaternary structure, homodimer.

The protein localises to the cytoplasm. The enzyme catalyses D-sedoheptulose 7-phosphate + D-glyceraldehyde 3-phosphate = D-erythrose 4-phosphate + beta-D-fructose 6-phosphate. It functions in the pathway carbohydrate degradation; pentose phosphate pathway; D-glyceraldehyde 3-phosphate and beta-D-fructose 6-phosphate from D-ribose 5-phosphate and D-xylulose 5-phosphate (non-oxidative stage): step 2/3. Transaldolase is important for the balance of metabolites in the pentose-phosphate pathway. The polypeptide is Transaldolase (Buchnera aphidicola subsp. Cinara cedri (strain Cc)).